The sequence spans 223 residues: Endonuclease III (223 aa).

Residues 118–137 (RDFLTAIEGIGDKTADVVLL) form the HhH domain. 4 residues coordinate [4Fe-4S] cluster: Cys-198, Cys-205, Cys-208, and Cys-214.

It belongs to the Nth/MutY family. It depends on [4Fe-4S] cluster as a cofactor.

The enzyme catalyses 2'-deoxyribonucleotide-(2'-deoxyribose 5'-phosphate)-2'-deoxyribonucleotide-DNA = a 3'-end 2'-deoxyribonucleotide-(2,3-dehydro-2,3-deoxyribose 5'-phosphate)-DNA + a 5'-end 5'-phospho-2'-deoxyribonucleoside-DNA + H(+). Probably part of a 4-gene DNA damage response locus in which the upstream ups system, in combination with this downstream locus, functions in homologous recombination to rescue Sulfolobales from DNA-damaging threats. DNA repair enzyme that has both DNA N-glycosylase activity and AP-lyase activity. The DNA N-glycosylase activity releases various damaged pyrimidines from DNA by cleaving the N-glycosidic bond, leaving an AP (apurinic/apyrimidinic) site. The AP-lyase activity cleaves the phosphodiester bond 3' to the AP site by a beta-elimination, leaving a 3'-terminal unsaturated sugar and a product with a terminal 5'-phosphate. Nicks UV-treated plasmid DNA in a dose-dependent manner, has no activity on untreated DNA. In Sulfolobus acidocaldarius (strain ATCC 33909 / DSM 639 / JCM 8929 / NBRC 15157 / NCIMB 11770), this protein is Endonuclease III.